Reading from the N-terminus, the 365-residue chain is tRNA/tmRNA (uracil-C(5))-methyltransferase (365 aa).

Residues Gln189, Tyr217, Asn222, Glu238, and Asp298 each contribute to the S-adenosyl-L-methionine site. Cys323 acts as the Nucleophile in catalysis. Glu357 serves as the catalytic Proton acceptor.

It belongs to the class I-like SAM-binding methyltransferase superfamily. RNA M5U methyltransferase family. TrmA subfamily.

It carries out the reaction uridine(54) in tRNA + S-adenosyl-L-methionine = 5-methyluridine(54) in tRNA + S-adenosyl-L-homocysteine + H(+). It catalyses the reaction uridine(341) in tmRNA + S-adenosyl-L-methionine = 5-methyluridine(341) in tmRNA + S-adenosyl-L-homocysteine + H(+). Functionally, dual-specificity methyltransferase that catalyzes the formation of 5-methyluridine at position 54 (m5U54) in all tRNAs, and that of position 341 (m5U341) in tmRNA (transfer-mRNA). The chain is tRNA/tmRNA (uracil-C(5))-methyltransferase from Shewanella loihica (strain ATCC BAA-1088 / PV-4).